A 243-amino-acid polypeptide reads, in one-letter code: 1-(5-phosphoribosyl)-5-[(5-phosphoribosylamino)methylideneamino] imidazole-4-carboxamide isomerase (243 aa).

Catalysis depends on Asp8, which acts as the Proton acceptor. The Proton donor role is filled by Asp130.

The protein belongs to the HisA/HisF family.

Its subcellular location is the cytoplasm. It catalyses the reaction 1-(5-phospho-beta-D-ribosyl)-5-[(5-phospho-beta-D-ribosylamino)methylideneamino]imidazole-4-carboxamide = 5-[(5-phospho-1-deoxy-D-ribulos-1-ylimino)methylamino]-1-(5-phospho-beta-D-ribosyl)imidazole-4-carboxamide. It participates in amino-acid biosynthesis; L-histidine biosynthesis; L-histidine from 5-phospho-alpha-D-ribose 1-diphosphate: step 4/9. In Acinetobacter baylyi (strain ATCC 33305 / BD413 / ADP1), this protein is 1-(5-phosphoribosyl)-5-[(5-phosphoribosylamino)methylideneamino] imidazole-4-carboxamide isomerase.